Reading from the N-terminus, the 345-residue chain is uncharacterized protein (345 aa).

M1 is a domain (TBDR plug). The 345-residue stretch at 1–345 (MDLGPIYNTR…EVILNTKIEF (345 aa)) folds into the TBDR beta-barrel domain. A TonB C-terminal box motif is present at residues 328-345 (PVALGYAREVILNTKIEF).

The protein belongs to the TonB-dependent receptor family.

It localises to the cell outer membrane. This is an uncharacterized protein from Haemophilus influenzae (strain ATCC 51907 / DSM 11121 / KW20 / Rd).